The primary structure comprises 459 residues: Glutamyl-tRNA(Gln) amidotransferase subunit A, mitochondrial (459 aa).

Residues Lys-37 and Ser-114 each act as charge relay system in the active site. The Acyl-ester intermediate role is filled by Ser-138.

Belongs to the amidase family. GatA subfamily. In terms of assembly, subunit of the heterotrimeric GatFAB amidotransferase (AdT) complex, composed of A, B and F subunits.

The protein resides in the mitochondrion. It catalyses the reaction L-glutamyl-tRNA(Gln) + L-glutamine + ATP + H2O = L-glutaminyl-tRNA(Gln) + L-glutamate + ADP + phosphate + H(+). Functionally, allows the formation of correctly charged Gln-tRNA(Gln) through the transamidation of misacylated Glu-tRNA(Gln) in the mitochondria. The reaction takes place in the presence of glutamine and ATP through an activated gamma-phospho-Glu-tRNA(Gln). The sequence is that of Glutamyl-tRNA(Gln) amidotransferase subunit A, mitochondrial from Yarrowia lipolytica (strain CLIB 122 / E 150) (Yeast).